We begin with the raw amino-acid sequence, 338 residues long: L-lysine 2,3-aminomutase (338 aa).

The Radical SAM core domain maps to 107–330 (HKYRNRLLFM…PKLAREIAGE (224 aa)). Cys-121, Cys-125, and Cys-128 together coordinate [4Fe-4S] cluster. At Lys-333 the chain carries N6-(pyridoxal phosphate)lysine.

It belongs to the radical SAM superfamily. KamA family. Requires [4Fe-4S] cluster as cofactor. Pyridoxal 5'-phosphate is required as a cofactor.

The catalysed reaction is L-lysine = D-beta-lysine. In terms of biological role, with EpmA is involved in the beta-lysylation step of the post-translational modification of translation elongation factor P (EF-P) on 'Lys-34'. EpmB appears to act before EpmA. Displays lysine 2,3-aminomutase activity, producing (R)-beta-lysine from (S)-alpha-lysine (L-lysine). This is L-lysine 2,3-aminomutase (epmB) from Haemophilus influenzae (strain ATCC 51907 / DSM 11121 / KW20 / Rd).